Here is a 155-residue protein sequence, read N- to C-terminus: Troponin C, isoform 2 (155 aa).

EF-hand domains lie at 11–46 (EQIAVLQKAFNSFDHQKTGSIPTEMVADILRLMGQP), 47–82 (FDRQILDELIDEVDEDKSGRLEFEEFVQLAAKFIVE), 87–122 (AMQKELREAFRLYDKQGNGYIPTSCLKEILKELDDQ), and 123–155 (LTEQELDIMIEEIDSDGSGTVDFDEFMEMMTGE). 5 residues coordinate Ca(2+): Asp60, Asp62, Ser64, Arg66, and Glu71. Residues Asp136, Asp138, Ser140, Thr142, and Glu147 each contribute to the Ca(2+) site.

This sequence belongs to the troponin C family. As to expression, accumulates almost exclusively in larval muscles.

The chain is Troponin C, isoform 2 (TpnC47D) from Drosophila melanogaster (Fruit fly).